The chain runs to 488 residues: Spermatogenesis-associated protein 6 (488 aa).

Residues 1-17 form the signal peptide; that stretch reads MPKVKALQCALALEIRS. A disordered region spans residues 175–225; sequence PHGRLQCRTSRSQKKKSKSPERSKYCINTKNYEQPTISSKSHSPSPYTKRR. Residues 200–220 show a composition bias toward polar residues; sequence CINTKNYEQPTISSKSHSPSP. 2 positions are modified to phosphoserine: Ser-217 and Ser-219. Lys-248 is covalently cross-linked (Glycyl lysine isopeptide (Lys-Gly) (interchain with G-Cter in SUMO2)). Ser-265, Ser-274, Ser-325, Ser-343, Ser-346, Ser-354, Ser-424, Ser-465, and Ser-487 each carry phosphoserine.

This sequence belongs to the SPATA6 family. In terms of assembly, interacts with MYL6. Testis-specific, in spermatocytes.

The protein resides in the secreted. It is found in the cell projection. It localises to the cilium. Its subcellular location is the flagellum. Its function is as follows. Required for formation of the sperm connecting piece during spermiogenesis. Sperm connecting piece is essential for linking the developing flagellum to the head during late spermiogenesis. May be involved in myosin-based microfilament transport through interaction with myosin subunits. In Rattus norvegicus (Rat), this protein is Spermatogenesis-associated protein 6 (Spata6).